The following is a 60-amino-acid chain: Large ribosomal subunit protein uL30 (60 aa).

It belongs to the universal ribosomal protein uL30 family. As to quaternary structure, part of the 50S ribosomal subunit.

The chain is Large ribosomal subunit protein uL30 from Salinispora arenicola (strain CNS-205).